The sequence spans 855 residues: Cone cGMP-specific 3',5'-cyclic phosphodiesterase subunit alpha' (855 aa).

GAF domains lie at 70–219 (SVEL…SIIL) and 251–428 (DVER…GWSL). Residues Ser-92, Ser-116, 164–167 (DKQT), and Thr-171 contribute to the 3',5'-cyclic GMP site. The 334-residue stretch at 481-814 (EEKQLVTILK…VEWKSLADEY (334 aa)) folds into the PDEase domain. The active-site Proton donor is His-557. A divalent metal cation-binding residues include His-561, His-597, Asp-598, and Asp-718. Residues 823–855 (EMKKQEEGNTTEKAVEDSGGGGDDKKSKTCLML) form a disordered region. Cys-852 carries the cysteine methyl ester modification. A lipid anchor (S-geranylgeranyl cysteine) is attached at Cys-852. Positions 853 to 855 (LML) are cleaved as a propeptide — removed in mature form.

Belongs to the cyclic nucleotide phosphodiesterase family. Composed of two alpha' subunits that are associated with 3 smaller proteins of 11, 13, and 15 kDa. A divalent metal cation serves as cofactor.

The protein resides in the cell membrane. It catalyses the reaction 3',5'-cyclic GMP + H2O = GMP + H(+). Its function is as follows. As cone-specific cGMP phosphodiesterase, it plays an essential role in light detection and cone phototransduction by rapidly decreasing intracellular levels of cGMP. This Bos taurus (Bovine) protein is Cone cGMP-specific 3',5'-cyclic phosphodiesterase subunit alpha' (PDE6C).